Reading from the N-terminus, the 237-residue chain is Aspartate/glutamate leucyltransferase (237 aa).

This sequence belongs to the R-transferase family. Bpt subfamily.

The protein resides in the cytoplasm. The catalysed reaction is N-terminal L-glutamyl-[protein] + L-leucyl-tRNA(Leu) = N-terminal L-leucyl-L-glutamyl-[protein] + tRNA(Leu) + H(+). It carries out the reaction N-terminal L-aspartyl-[protein] + L-leucyl-tRNA(Leu) = N-terminal L-leucyl-L-aspartyl-[protein] + tRNA(Leu) + H(+). In terms of biological role, functions in the N-end rule pathway of protein degradation where it conjugates Leu from its aminoacyl-tRNA to the N-termini of proteins containing an N-terminal aspartate or glutamate. The chain is Aspartate/glutamate leucyltransferase from Marinobacter nauticus (strain ATCC 700491 / DSM 11845 / VT8) (Marinobacter aquaeolei).